Here is a 348-residue protein sequence, read N- to C-terminus: RNA 3'-terminal phosphate cyclase (348 aa).

Residues Gln107 and 290 to 294 each bind ATP; that span reads HLADQ. The Tele-AMP-histidine intermediate role is filled by His316.

It belongs to the RNA 3'-terminal cyclase family. Type 1 subfamily.

The protein resides in the cytoplasm. The enzyme catalyses a 3'-end 3'-phospho-ribonucleotide-RNA + ATP = a 3'-end 2',3'-cyclophospho-ribonucleotide-RNA + AMP + diphosphate. In terms of biological role, catalyzes the conversion of 3'-phosphate to a 2',3'-cyclic phosphodiester at the end of RNA. The mechanism of action of the enzyme occurs in 3 steps: (A) adenylation of the enzyme by ATP; (B) transfer of adenylate to an RNA-N3'P to produce RNA-N3'PP5'A; (C) and attack of the adjacent 2'-hydroxyl on the 3'-phosphorus in the diester linkage to produce the cyclic end product. The biological role of this enzyme is unknown but it is likely to function in some aspects of cellular RNA processing. This is RNA 3'-terminal phosphate cyclase (rtcA) from Nostoc sp. (strain PCC 7120 / SAG 25.82 / UTEX 2576).